The following is a 286-amino-acid chain: Gap junction alpha-6 protein (286 aa).

At 1-23 (MSDWSALHQLLEKVQPYSTAGGK) the chain is on the cytoplasmic side. A helical membrane pass occupies residues 24–41 (VWIKVLFIFRILLLGTAI). Over 42 to 76 (ESAWSDEQFEFHCNTQQPGCENVCYDQAFPISHVR) the chain is Extracellular. Residues 77–99 (LWVLQVIFVSVPTLLHLAHVYYV) form a helical membrane-spanning segment. Topologically, residues 100 to 151 (IRQNEKLKKQEEEELKVAHFNGASGERRLQKHTGKHIKCGSKEHGNRKMRGR) are cytoplasmic. A helical membrane pass occupies residues 152 to 174 (LLLTYMASIFFKSVFEVAFLLIQ). At 175–209 (WYLYGFTLSAVYICEQSPCPHRVDCFLSRPTEKTI) the chain is on the extracellular side. A helical transmembrane segment spans residues 210–232 (FILFMLVVSMVSFVLNVIELFYV). Over 233–286 (LFKAIKNHLGNEKEEVYCNPVELQKPSCVSSSAVLTTICSSDQVVPVGLSSFYM) the chain is Cytoplasmic.

The protein belongs to the connexin family. Alpha-type (group II) subfamily. In terms of assembly, a connexon is composed of a hexamer of connexins. In terms of tissue distribution, expressed in testis.

Its subcellular location is the cell membrane. The protein resides in the cell junction. It localises to the gap junction. Functionally, one gap junction consists of a cluster of closely packed pairs of transmembrane channels, the connexons, through which materials of low MW diffuse from one cell to a neighboring cell. This Rattus norvegicus (Rat) protein is Gap junction alpha-6 protein (Gja6).